A 614-amino-acid polypeptide reads, in one-letter code: MIQALLVTICLAVFPYQGSSIILESGNVNDYEVVYPQKVPLLPKGGVQNPQPKTKYEDTVQYEFEVNGEPVVLHLERNKGLFSEDYTEAHYAPDGREITTRPPVQDHCYYHGYIQNEADSSAAISACDGLKGHFKHQGETYFIEPLKLSDSEAHAIYKDENVEEENETPKICGLTETTWESDEPIRNASLLIYTPEQNRYLKVKKYIEFYVAVDNRMYRHYKRNKPIIKRRVYELVNILNTILRRLNFHIALIGLEIWSKRDKINVQSDVKATLKSFGKWREKKLLPRKRNDNAQLLTRIDFNGNTVGLAALGSLCSVKYSVAVIQDYSKRTSMVASTMAHEMGHNLGINHDRASCTSCGSNKCIMATKRTKPASRFSSCSVREHQRYLLRDRPQCILNKPLITDIVAPAICGNYFVEVGEECDCGSPRDCRSACCNAATCKLKHEAQCDSGECCGKCKFKKVGAKCRAAKDDCDLPERCTGRSAECPTDIFRRNGLPCQNKQGYCYNGKCPTLTNQCIALMGPNVKVSRDSCFTLNQRGKGCGYCRMQNGAKIPCAAKDIKCGKLFCKKRNSGVCNCLILPDDPNYGMVETGTKCGDGMVCSDRKCVKLQTVY.

The first 20 residues, 1-20 (MIQALLVTICLAVFPYQGSS), serve as a signal peptide directing secretion. Positions 21 to 188 (IILESGNVND…WESDEPIRNA (168 aa)) are excised as a propeptide. Asn-187 carries an N-linked (GlcNAc...) asparagine glycan. The 197-residue stretch at 205-401 (KYIEFYVAVD…DRPQCILNKP (197 aa)) folds into the Peptidase M12B domain. 17 disulfides stabilise this stretch: Cys-316–Cys-396, Cys-356–Cys-380, Cys-359–Cys-364, Cys-412–Cys-441, Cys-423–Cys-436, Cys-425–Cys-431, Cys-435–Cys-458, Cys-449–Cys-455, Cys-454–Cys-480, Cys-467–Cys-487, Cys-474–Cys-506, Cys-499–Cys-511, Cys-518–Cys-568, Cys-533–Cys-576, Cys-546–Cys-556, Cys-563–Cys-602, and Cys-596–Cys-607. A Zn(2+)-binding site is contributed by His-341. Glu-342 is an active-site residue. Zn(2+) contacts are provided by His-345 and His-351. Residues 409 to 495 (PAICGNYFVE…ECPTDIFRRN (87 aa)) enclose the Disintegrin domain. The D/ECD-tripeptide motif lies at 473–475 (DCD).

Belongs to the venom metalloproteinase (M12B) family. P-III subfamily. P-IIIa sub-subfamily. In terms of assembly, monomer. The cofactor is Zn(2+). In terms of tissue distribution, expressed by the venom gland.

The protein localises to the secreted. In terms of biological role, snake venom zinc metalloproteinase that inhibits platelet aggregation and degrades fibrinogen. In Bungarus multicinctus (Many-banded krait), this protein is Zinc metalloproteinase-disintegrin-like BmMP.